The chain runs to 1833 residues: Proteasome activator complex subunit 4A (1833 aa).

2 HEAT repeats span residues 460-504 (PEGP…LVDC) and 983-1022 (NFCCRDIIPVVLKYLDPERTDVTQQQFKGALYCLLGNHSG). The segment at 1095-1122 (SSSPEPNPGAASEQEELEGRKREEQKNK) is disordered. A compositionally biased stretch (basic and acidic residues) spans 1111-1122 (LEGRKREEQKNK). 4 HEAT repeats span residues 1164–1202 (LPLPSSAVLFFVESLNHDSLLVRNVAISAVAGILKQLKR), 1344–1382 (DAFLPLLKPHMERLVADSHESPQRCVAEIISGLIRGSKH), 1626–1664 (SDQIPQVLSALEEISRSSSWHARYTILTYLQIMVFYNLF), and 1670–1708 (AKAVCDVRALVLRLLEDEQLEVREMAATTLSGFLQCNFL). The segment at 1640–1728 (SRSSSWHARY…ESLSKTRLPK (89 aa)) is bromodomain-like (BRDL).

This sequence belongs to the BLM10 family. Homodimer. Interacts with the 20S and 26S proteasomes.

It localises to the cytoplasm. It is found in the cytosol. Its subcellular location is the nucleus. The protein localises to the nucleus speckle. Associated component of the proteasome that specifically recognizes acetylated histones and promotes ATP- and ubiquitin-independent degradation of core histones during DNA damage response. Recognizes and binds acetylated histones via its bromodomain-like (BRDL) region and activates the proteasome by opening the gated channel for substrate entry. Binds to the core proteasome via its C-terminus, which occupies the same binding sites as the proteasomal ATPases, opening the closed structure of the proteasome via an active gating mechanism. involved in DNA damage response in somatic cells: binds to acetylated histones and promotes degradation of histones. The chain is Proteasome activator complex subunit 4A (psme4a) from Danio rerio (Zebrafish).